A 364-amino-acid chain; its full sequence is Mannose-1-phosphate guanyltransferase (364 aa).

It belongs to the transferase hexapeptide repeat family.

The protein localises to the cytoplasm. The catalysed reaction is alpha-D-mannose 1-phosphate + GTP + H(+) = GDP-alpha-D-mannose + diphosphate. It participates in nucleotide-sugar biosynthesis; GDP-alpha-D-mannose biosynthesis; GDP-alpha-D-mannose from alpha-D-mannose 1-phosphate (GTP route): step 1/1. Involved in cell wall synthesis where it is required for glycosylation. Involved in cell cycle progression through cell-size checkpoint. The sequence is that of Mannose-1-phosphate guanyltransferase (mpg1) from Aspergillus fumigatus (strain ATCC MYA-4609 / CBS 101355 / FGSC A1100 / Af293) (Neosartorya fumigata).